Consider the following 223-residue polypeptide: uncharacterized protein (223 aa).

The segment at glycine 40–lysine 70 is disordered. Residues threonine 51 to lysine 70 are compositionally biased toward basic and acidic residues.

This is an uncharacterized protein from Homo sapiens (Human).